We begin with the raw amino-acid sequence, 419 residues long: Glucose-1-phosphate adenylyltransferase (419 aa).

Alpha-D-glucose 1-phosphate-binding positions include Tyr-106, Gly-171, 186-187 (EK), and Ser-204.

This sequence belongs to the bacterial/plant glucose-1-phosphate adenylyltransferase family. In terms of assembly, homotetramer.

The enzyme catalyses alpha-D-glucose 1-phosphate + ATP + H(+) = ADP-alpha-D-glucose + diphosphate. It participates in glycan biosynthesis; glycogen biosynthesis. Functionally, involved in the biosynthesis of ADP-glucose, a building block required for the elongation reactions to produce glycogen. Catalyzes the reaction between ATP and alpha-D-glucose 1-phosphate (G1P) to produce pyrophosphate and ADP-Glc. This Roseobacter denitrificans (strain ATCC 33942 / OCh 114) (Erythrobacter sp. (strain OCh 114)) protein is Glucose-1-phosphate adenylyltransferase.